Here is a 354-residue protein sequence, read N- to C-terminus: Peptide chain release factor 1 (354 aa).

An N5-methylglutamine modification is found at Gln-232.

It belongs to the prokaryotic/mitochondrial release factor family. Post-translationally, methylated by PrmC. Methylation increases the termination efficiency of RF1.

Its subcellular location is the cytoplasm. In terms of biological role, peptide chain release factor 1 directs the termination of translation in response to the peptide chain termination codons UAG and UAA. This is Peptide chain release factor 1 from Phytoplasma australiense.